A 374-amino-acid polypeptide reads, in one-letter code: 4-galactosyl-N-acetylglucosaminide 3-alpha-L-fucosyltransferase FUT5 (374 aa).

Topologically, residues 1–15 are cytoplasmic; that stretch reads MDPLGPAKPQWLWRR. A helical; Signal-anchor for type II membrane protein membrane pass occupies residues 16–34; it reads CLAGLLFQLLVAVCFFSYL. The Lumenal portion of the chain corresponds to 35–374; that stretch reads RVSRDDATGS…TVRSIAAWFT (340 aa). Residues Asn-60, Asn-105, Asn-167, and Asn-198 are each glycosylated (N-linked (GlcNAc...) asparagine).

The protein belongs to the glycosyltransferase 10 family. As to expression, liver, colon and testis and trace amounts in T-cells and brain.

The protein resides in the golgi apparatus. The protein localises to the golgi stack membrane. The enzyme catalyses a beta-D-galactosyl-(1-&gt;3)-N-acetyl-beta-D-glucosaminyl derivative + GDP-beta-L-fucose = a beta-D-galactosyl-(1-&gt;3)-[alpha-L-fucosyl-(1-&gt;4)]-N-acetyl-beta-D-glucosaminyl derivative + GDP + H(+). The catalysed reaction is an N-acetyl-alpha-neuraminyl-(2-&gt;3)-beta-D-galactosyl-(1-&gt;4)-N-acetyl-beta-D-glucosaminyl derivative + GDP-beta-L-fucose = an alpha-Neu5Ac-(2-&gt;3)-beta-D-Gal-(1-&gt;4)-[alpha-L-Fuc-(1-&gt;3)]-beta-D-GlcNAc derivative + GDP + H(+). It carries out the reaction an alpha-Neu5Ac-(2-&gt;3)-beta-D-Gal-(1-&gt;4)-beta-D-GlcNAc-(1-&gt;3)-beta-D-Gal-(1-&gt;4)-[alpha-L-Fuc-(1-&gt;3)]-beta-D-GlcNAc derivative + GDP-beta-L-fucose = an alpha-Neu5Ac-(2-&gt;3)-beta-D-Gal-(1-&gt;4)-[alpha-L-Fuc-(1-&gt;3)]-beta-D-GlcNAc-(1-&gt;3)-beta-D-Gal-(1-&gt;4)-[alpha-L-Fuc-(1-&gt;3)]-beta-D-GlcNAc derivative + GDP + H(+). It catalyses the reaction a beta-D-galactosyl-(1-&gt;4)-N-acetyl-beta-D-glucosaminyl derivative + GDP-beta-L-fucose = a beta-D-galactosyl-(1-&gt;4)-[alpha-L-fucosyl-(1-&gt;3)]-N-acetyl-beta-D-glucosaminyl derivative + GDP + H(+). The enzyme catalyses a neolactoside nLc4Cer + GDP-beta-L-fucose = a neolactoside III(3)-alpha-Fuc-nLc4Cer + GDP + H(+). The catalysed reaction is a neolactoside nLc6Cer + GDP-beta-L-fucose = beta-D-galactosyl-(1-&gt;4)-N-acetyl-beta-D-glucosaminyl-(1-&gt;3)-beta-D-galactosyl-(1-&gt;4)-[alpha-L-fucosyl-(1-&gt;3)]-N-acetyl-beta-D-glucosaminyl-(1-&gt;3)-beta-D-galactosyl-(1-&gt;4)-beta-D-glucosyl-(1&lt;-&gt;1')-ceramide + GDP + H(+). It carries out the reaction a neolactoside nLc6Cer(d18:1(4E)) + GDP-beta-L-fucose = a neolactoside III(3)-alpha-Fuc-nLc6Cer(d18:1(4E)) + GDP + H(+). It catalyses the reaction a neolactoside nLc4Cer(d18:1(4E)) + GDP-beta-L-fucose = a neolactoside III(3)-alpha-Fuc-nLc4Cer(d18:1(4E)) + GDP + H(+). The enzyme catalyses a neolactoside VI(3)-alpha-NeuNAc-nLc6Cer + GDP-beta-L-fucose = a neolactoside VI(3)-alpha-NeuAc,III(3)-alphaFuc-nLc6Cer + GDP + H(+). The catalysed reaction is beta-D-galactosyl-(1-&gt;4)-N-acetyl-D-glucosamine + GDP-beta-L-fucose = beta-D-galactosyl-(1-&gt;4)-[alpha-L-fucosyl-(1-&gt;3)]-N-acetyl-D-glucosamine + GDP + H(+). It carries out the reaction N-acetyl-alpha-neuraminosyl-(2-&gt;3)-beta-D-galactosyl-(1-&gt;4)-N-acetyl-beta-D-glucosamine + GDP-beta-L-fucose = N-acetyl-alpha-neuraminosyl-(2-&gt;3)-beta-D-galactosyl-(1-&gt;4)-[alpha-L-fucosyl-(1-&gt;3)]-N-acetyl-beta-D-glucosamine + GDP + H(+). It catalyses the reaction alpha-L-Fuc-(1-&gt;2)-beta-D-Gal-(1-&gt;4)-D-GlcNAc + GDP-beta-L-fucose = alpha-L-Fuc-(1-&gt;2)-beta-D-Gal-(1-&gt;4)-[alpha-L-Fuc-(1-&gt;3)]-D-GlcNAc + GDP + H(+). The enzyme catalyses an alpha-Neu5Ac-(2-&gt;3)-beta-D-Gal-(1-&gt;3)-D-GlcNAc derivative + GDP-beta-L-fucose = an alpha-Neu5Ac-(2-&gt;3)-beta-D-Gal-(1-&gt;3)-[alpha-L-Fuc-(1-&gt;4)]-beta-D-GlcNAc derivative + GDP + H(+). It participates in protein modification; protein glycosylation. Catalyzes preferentially the transfer of L-fucose, from a guanosine diphosphate-beta-L-fucose, to the N-acetyl-beta-D-glucosamine (GlcNAc) of an N-acetyllactosamine unit (type 2 chain) of an oligosaccharide, or a glycoprotein- and a glycolipid-linked N-acetyllactosamine unit via an alpha (1,3) linkage and participates in the surface expression of VIM-2, Lewis X/SSEA-1 and sialyl Lewis X antigens. Preferentially transfers fucose to the GlcNAc of an internal N-acetyllactosamine unit of a poly-N-acetyllactosamine chain acceptor substrate. Also catalyzes to a lesser extend the transfer of L-fucose to the GlcNAc of a type 1 (beta-D-galactosyl-(1-&gt;3)-N-acetyl-beta-D-glucosaminyl) or H-type 1 (alpha-L-Fuc-(1-&gt;2)-beta-D-Gal-(1-&gt;3)-D-GlcNAc) chain oligosaccharide via an alpha (1,4) linkage. Preferentially catalyzes sialylated type 2 oligosaccharide acceptors over neutral type 2 or H type 2 (alpha-L-Fuc-(1-&gt;2)-beta-D-Gal-(1-&gt;4)-D-GlcNAc) oligosaccharide acceptors. Lactose-based structures are also acceptor substrates. In Homo sapiens (Human), this protein is 4-galactosyl-N-acetylglucosaminide 3-alpha-L-fucosyltransferase FUT5.